A 186-amino-acid polypeptide reads, in one-letter code: UPF0301 protein Mmc1_0726 (186 aa).

The protein belongs to the UPF0301 (AlgH) family.

This chain is UPF0301 protein Mmc1_0726, found in Magnetococcus marinus (strain ATCC BAA-1437 / JCM 17883 / MC-1).